The following is a 188-amino-acid chain: Elongation factor P (188 aa).

Position 34 is an N6-(3,6-diaminohexanoyl)-5-hydroxylysine (Lys-34).

Belongs to the elongation factor P family. May be beta-lysylated on the epsilon-amino group of Lys-34 by the combined action of EpmA and EpmB, and then hydroxylated on the C5 position of the same residue by EpmC (if this protein is present). Lysylation is critical for the stimulatory effect of EF-P on peptide-bond formation. The lysylation moiety may extend toward the peptidyltransferase center and stabilize the terminal 3-CCA end of the tRNA. Hydroxylation of the C5 position on Lys-34 may allow additional potential stabilizing hydrogen-bond interactions with the P-tRNA.

The protein localises to the cytoplasm. It functions in the pathway protein biosynthesis; polypeptide chain elongation. Involved in peptide bond synthesis. Alleviates ribosome stalling that occurs when 3 or more consecutive Pro residues or the sequence PPG is present in a protein, possibly by augmenting the peptidyl transferase activity of the ribosome. Modification of Lys-34 is required for alleviation. The polypeptide is Elongation factor P (Xanthomonas oryzae pv. oryzae (strain MAFF 311018)).